A 305-amino-acid polypeptide reads, in one-letter code: MDVSGEPTVCSNAYANEMKLSDSKDIYVLAHPVTKKTRKRPRGLPLGVKLDPPTFKLNNMSHHYDTETFTPVSSQLDSVEVFSKFNISPEWYDLLSDELKEPYAKGIFLEYNRLLNSGEEILPSTGDIFAWTRFCGPQSIRVVIIGQDPYPTAGHAHGLAFSVKRGITPPSSLKNIFAALMESYPNMTPPTHGCLESWARQGVLLLNTTLTVRRGTPGSHVYLGWGRLVQRVLQRLCENRTGLVFMLWGAHAQKTTQPNSRCHLVLTHAHPSPLSRVPFRNCRHFVQANEYFTRKGEPEIDWSVI.

The active-site Proton acceptor is aspartate 148.

This sequence belongs to the uracil-DNA glycosylase (UDG) superfamily. UNG family.

The protein resides in the host nucleus. The catalysed reaction is Hydrolyzes single-stranded DNA or mismatched double-stranded DNA and polynucleotides, releasing free uracil.. In terms of biological role, excises uracil residues from the DNA which can arise as a result of misincorporation of dUMP residues by DNA polymerase or deamination of cytosines. Therefore may reduce deleterious uracil incorporation into the viral genome, particularly in terminally differentiated cells which lack DNA repair enzymes. The polypeptide is Uracil-DNA glycosylase (Varicella-zoster virus (strain Dumas) (HHV-3)).